The primary structure comprises 82 residues: Small ribosomal subunit protein uS17 (82 aa).

Belongs to the universal ribosomal protein uS17 family. Part of the 30S ribosomal subunit.

Functionally, one of the primary rRNA binding proteins, it binds specifically to the 5'-end of 16S ribosomal RNA. The protein is Small ribosomal subunit protein uS17 of Bradyrhizobium diazoefficiens (strain JCM 10833 / BCRC 13528 / IAM 13628 / NBRC 14792 / USDA 110).